The following is a 741-amino-acid chain: Ethylene receptor (741 aa).

3 consecutive transmembrane segments (helical) span residues 23 to 43 (ISDF…IYFV), 53 to 73 (WVLV…LINL), and 92 to 112 (VLTA…IPDL). Residues cysteine 65 and histidine 69 each contribute to the Cu cation site. In terms of domain architecture, GAF spans 158–307 (DRHTILKTTL…VVADQVAVAL (150 aa)). Positions 350–589 (VMNHEMRTPM…TFIVKLGFPE (240 aa)) constitute a Histidine kinase domain. Histidine 353 carries the post-translational modification Phosphohistidine; by autocatalysis. One can recognise a Response regulatory domain in the interval 615-732 (KVLVMDDNGV…KMRSVLSELL (118 aa)). Aspartate 663 bears the 4-aspartylphosphate mark.

The protein belongs to the ethylene receptor family. Homodimer; disulfide-linked. The cofactor is Cu cation. In terms of processing, activation probably requires a transfer of a phosphate group between a His in the transmitter domain and an Asp of the receiver domain.

It localises to the endoplasmic reticulum membrane. The enzyme catalyses ATP + protein L-histidine = ADP + protein N-phospho-L-histidine.. Its function is as follows. May act early in the ethylene signal transduction pathway, possibly as an ethylene receptor, or as a regulator of the pathway. The chain is Ethylene receptor (ETR1) from Malus domestica (Apple).